Consider the following 179-residue polypeptide: Large ribosomal subunit protein uL6 (179 aa).

This sequence belongs to the universal ribosomal protein uL6 family. In terms of assembly, part of the 50S ribosomal subunit.

In terms of biological role, this protein binds to the 23S rRNA, and is important in its secondary structure. It is located near the subunit interface in the base of the L7/L12 stalk, and near the tRNA binding site of the peptidyltransferase center. The chain is Large ribosomal subunit protein uL6 from Bifidobacterium longum (strain DJO10A).